The chain runs to 283 residues: Phosphatidylserine decarboxylase proenzyme (283 aa).

Active-site charge relay system; for autoendoproteolytic cleavage activity residues include Asp-90, His-143, and Ser-248. Ser-248 serves as the catalytic Schiff-base intermediate with substrate; via pyruvic acid; for decarboxylase activity. Pyruvic acid (Ser); by autocatalysis is present on Ser-248.

It belongs to the phosphatidylserine decarboxylase family. PSD-B subfamily. Prokaryotic type I sub-subfamily. In terms of assembly, heterodimer of a large membrane-associated beta subunit and a small pyruvoyl-containing alpha subunit. Pyruvate serves as cofactor. In terms of processing, is synthesized initially as an inactive proenzyme. Formation of the active enzyme involves a self-maturation process in which the active site pyruvoyl group is generated from an internal serine residue via an autocatalytic post-translational modification. Two non-identical subunits are generated from the proenzyme in this reaction, and the pyruvate is formed at the N-terminus of the alpha chain, which is derived from the carboxyl end of the proenzyme. The autoendoproteolytic cleavage occurs by a canonical serine protease mechanism, in which the side chain hydroxyl group of the serine supplies its oxygen atom to form the C-terminus of the beta chain, while the remainder of the serine residue undergoes an oxidative deamination to produce ammonia and the pyruvoyl prosthetic group on the alpha chain. During this reaction, the Ser that is part of the protease active site of the proenzyme becomes the pyruvoyl prosthetic group, which constitutes an essential element of the active site of the mature decarboxylase.

Its subcellular location is the cell membrane. It carries out the reaction a 1,2-diacyl-sn-glycero-3-phospho-L-serine + H(+) = a 1,2-diacyl-sn-glycero-3-phosphoethanolamine + CO2. Its pathway is phospholipid metabolism; phosphatidylethanolamine biosynthesis; phosphatidylethanolamine from CDP-diacylglycerol: step 2/2. Catalyzes the formation of phosphatidylethanolamine (PtdEtn) from phosphatidylserine (PtdSer). The protein is Phosphatidylserine decarboxylase proenzyme of Francisella tularensis subsp. holarctica (strain OSU18).